Reading from the N-terminus, the 88-residue chain is Small ribosomal subunit protein bS20 (88 aa).

It belongs to the bacterial ribosomal protein bS20 family.

Its function is as follows. Binds directly to 16S ribosomal RNA. The polypeptide is Small ribosomal subunit protein bS20 (Bradyrhizobium diazoefficiens (strain JCM 10833 / BCRC 13528 / IAM 13628 / NBRC 14792 / USDA 110)).